The primary structure comprises 204 residues: Methylthioribulose-1-phosphate dehydratase (204 aa).

The Zn(2+) site is built by His94 and His96.

It belongs to the aldolase class II family. MtnB subfamily. The cofactor is Zn(2+).

It carries out the reaction 5-(methylsulfanyl)-D-ribulose 1-phosphate = 5-methylsulfanyl-2,3-dioxopentyl phosphate + H2O. It participates in amino-acid biosynthesis; L-methionine biosynthesis via salvage pathway; L-methionine from S-methyl-5-thio-alpha-D-ribose 1-phosphate: step 2/6. In terms of biological role, catalyzes the dehydration of methylthioribulose-1-phosphate (MTRu-1-P) into 2,3-diketo-5-methylthiopentyl-1-phosphate (DK-MTP-1-P). This chain is Methylthioribulose-1-phosphate dehydratase, found in Enterobacter sp. (strain 638).